Here is a 425-residue protein sequence, read N- to C-terminus: MLDLKRIRTDFDTVAAKLATRGVDAATLNQMKTIDKERRDLLVKVEELKAERNTVSAEIAQAKRNKENADDKIAAMQKLSAEVKNLDATLAELDAKLTEFTTTLPNIPHESVPVGADEDENVEVRRWGTPRQFDFEAKAHWDLGEDLDILDWERGAKVTGARFLFYKGLGARLERAIYNFMLDEHGKEGYTEVITPYMVNHDSMFGTGQYPKFKEDTFELSDTNFVLIPTAEVPLTNYYRDEILDGKELPIYFTAMSPSFRSEAGSAGRDTRGLIRLHQFHKVEMVKFAKPEESYEELEKMTANAENILQKLNLPYRVVALCTGDMGFSAAKTYDLEVWIPAQNTYREISSCSNTEDFQARRAQIRYRDEADGKVKLLHTLNGSGLAVGRTVAAILENYQNEDGSVTIPEVLRPYMGGLEVIAPK.

230–232 (TAE) serves as a coordination point for L-serine. 261 to 263 (RSE) lines the ATP pocket. E284 contributes to the L-serine binding site. Position 348–351 (348–351 (EISS)) interacts with ATP. Residue S384 participates in L-serine binding.

This sequence belongs to the class-II aminoacyl-tRNA synthetase family. Type-1 seryl-tRNA synthetase subfamily. As to quaternary structure, homodimer. The tRNA molecule binds across the dimer.

It is found in the cytoplasm. The enzyme catalyses tRNA(Ser) + L-serine + ATP = L-seryl-tRNA(Ser) + AMP + diphosphate + H(+). It catalyses the reaction tRNA(Sec) + L-serine + ATP = L-seryl-tRNA(Sec) + AMP + diphosphate + H(+). It functions in the pathway aminoacyl-tRNA biosynthesis; selenocysteinyl-tRNA(Sec) biosynthesis; L-seryl-tRNA(Sec) from L-serine and tRNA(Sec): step 1/1. Functionally, catalyzes the attachment of serine to tRNA(Ser). Is also able to aminoacylate tRNA(Sec) with serine, to form the misacylated tRNA L-seryl-tRNA(Sec), which will be further converted into selenocysteinyl-tRNA(Sec). The sequence is that of Serine--tRNA ligase from Streptococcus gordonii (strain Challis / ATCC 35105 / BCRC 15272 / CH1 / DL1 / V288).